Reading from the N-terminus, the 473-residue chain is Putative BTB/POZ domain-containing protein R765 (473 aa).

The BTB domain occupies 2 to 72 (TNIQLVIKDD…KIYDREITAD (71 aa)).

This sequence belongs to the mimivirus BTB/WD family.

The chain is Putative BTB/POZ domain-containing protein R765 from Acanthamoeba polyphaga mimivirus (APMV).